The chain runs to 296 residues: MFKSGFVTIVGRPNVGKSTLLNAIMKEKLSIVSCRPQTTRNNIQTILTEDNYQLVFVDTPGIHKPKHKLGEYMVKSASDAMKDVDLVLFLINPDEKPGRGDLFIIEQLKEVKVPVFLVLNKIDENPQEKVAETLKTYSELMEFQEIIPISALKGKNVDLLKELMFKYIPEGPQYYPEDMIIDQNERFIVAEIVREKALRLLSEEVPHGIAVEILQMKKNEKGTYHIEGNILCEKNSHKPIIIGKGGSKLKKISQYARQDIEAFLQSKVYIRLWVKVKEEWRDNQSLLKELGYKKMK.

In terms of domain architecture, Era-type G spans 3-170 (KSGFVTIVGR…KELMFKYIPE (168 aa)). Residues 11–18 (GRPNVGKS) are G1. 11–18 (GRPNVGKS) is a binding site for GTP. The tract at residues 37 to 41 (QTTRN) is G2. Residues 58-61 (DTPG) are G3. GTP-binding positions include 58-62 (DTPGI) and 120-123 (NKID). Residues 120–123 (NKID) form a G4 region. The tract at residues 149 to 151 (ISA) is G5. Positions 201 to 278 (LSEEVPHGIA…YIRLWVKVKE (78 aa)) constitute a KH type-2 domain.

The protein belongs to the TRAFAC class TrmE-Era-EngA-EngB-Septin-like GTPase superfamily. Era GTPase family. In terms of assembly, monomer.

The protein resides in the cytoplasm. It localises to the cell membrane. An essential GTPase that binds both GDP and GTP, with rapid nucleotide exchange. Plays a role in 16S rRNA processing and 30S ribosomal subunit biogenesis and possibly also in cell cycle regulation and energy metabolism. This chain is GTPase Era, found in Clostridium botulinum (strain Kyoto / Type A2).